The sequence spans 81 residues: Short neurotoxin B (81 aa).

Positions 1 to 21 (MKTLLLTLVVVTIVCLDLGYT) are cleaved as a signal peptide. 4 cysteine pairs are disulfide-bonded: Cys24/Cys43, Cys38/Cys60, Cys62/Cys73, and Cys74/Cys79.

This sequence belongs to the three-finger toxin family. Short-chain subfamily. Type I alpha-neurotoxin sub-subfamily. In terms of tissue distribution, expressed by the venom gland.

The protein resides in the secreted. Functionally, binds to muscle nicotinic acetylcholine receptor (nAChR) and inhibit acetylcholine from binding to the receptor, thereby impairing neuromuscular transmission. The chain is Short neurotoxin B from Aipysurus laevis (Olive sea snake).